A 540-amino-acid chain; its full sequence is Chaperonin GroEL (540 aa).

ATP-binding positions include threonine 30–proline 33, lysine 51, aspartate 87–threonine 91, glycine 415, asparagine 479–alanine 481, and aspartate 495.

The protein belongs to the chaperonin (HSP60) family. As to quaternary structure, forms a cylinder of 14 subunits composed of two heptameric rings stacked back-to-back. Interacts with the co-chaperonin GroES.

It localises to the cytoplasm. It catalyses the reaction ATP + H2O + a folded polypeptide = ADP + phosphate + an unfolded polypeptide.. In terms of biological role, together with its co-chaperonin GroES, plays an essential role in assisting protein folding. The GroEL-GroES system forms a nano-cage that allows encapsulation of the non-native substrate proteins and provides a physical environment optimized to promote and accelerate protein folding. This chain is Chaperonin GroEL, found in Raoultella ornithinolytica (Klebsiella ornithinolytica).